A 273-amino-acid chain; its full sequence is Endochitinase EP3 (273 aa).

An N-terminal signal peptide occupies residues 1 to 28; it reads MLTPTISKSISLVTILLVLQAFSNTTKA. Residue asparagine 24 is glycosylated (N-linked (GlcNAc...) asparagine). A Chitin-binding type-1 domain is found at 29 to 63; it reads QNCGCSSELCCSQFGFCGNTSDYCGVGCQQGPCFA. Cystine bridges form between cysteine 31/cysteine 39, cysteine 33/cysteine 45, cysteine 38/cysteine 52, and cysteine 56/cysteine 61. N-linked (GlcNAc...) asparagine glycosylation occurs at asparagine 47. The segment at 70–273 is catalytic; sequence VSVAEIVTQE…GVDPGNNLTC (204 aa). Glutamate 136 serves as the catalytic Proton donor. Asparagine 157 and asparagine 270 each carry an N-linked (GlcNAc...) asparagine glycan.

It belongs to the glycosyl hydrolase 19 family. Chitinase class I subfamily. Expressed in cells surrounding embryos, stems, seedlings, pollen, roots, shoots, inflorescence, flowers, siliques and leaves. Present in seedpods and seed embryos, but not in roots, inflorescence stems, leaves and flowers.

It carries out the reaction Random endo-hydrolysis of N-acetyl-beta-D-glucosaminide (1-&gt;4)-beta-linkages in chitin and chitodextrins.. Its function is as follows. Probably involved in hypersensitive reaction upon Xanthomonas campestris infection. This chain is Endochitinase EP3, found in Arabidopsis thaliana (Mouse-ear cress).